We begin with the raw amino-acid sequence, 382 residues long: 1-deoxy-D-xylulose 5-phosphate reductoisomerase (382 aa).

The NADPH site is built by threonine 11, glycine 12, serine 13, isoleucine 14, and asparagine 123. 1-deoxy-D-xylulose 5-phosphate is bound at residue lysine 124. Glutamate 125 contacts NADPH. Position 149 (aspartate 149) interacts with Mn(2+). Residues serine 150, glutamate 151, serine 173, and histidine 196 each coordinate 1-deoxy-D-xylulose 5-phosphate. Glutamate 151 is a Mn(2+) binding site. Glycine 202 is a binding site for NADPH. Positions 209, 214, 215, and 218 each coordinate 1-deoxy-D-xylulose 5-phosphate. Glutamate 218 lines the Mn(2+) pocket.

The protein belongs to the DXR family. It depends on Mg(2+) as a cofactor. Mn(2+) serves as cofactor.

It catalyses the reaction 2-C-methyl-D-erythritol 4-phosphate + NADP(+) = 1-deoxy-D-xylulose 5-phosphate + NADPH + H(+). Its pathway is isoprenoid biosynthesis; isopentenyl diphosphate biosynthesis via DXP pathway; isopentenyl diphosphate from 1-deoxy-D-xylulose 5-phosphate: step 1/6. Catalyzes the NADPH-dependent rearrangement and reduction of 1-deoxy-D-xylulose-5-phosphate (DXP) to 2-C-methyl-D-erythritol 4-phosphate (MEP). The protein is 1-deoxy-D-xylulose 5-phosphate reductoisomerase of Phocaeicola vulgatus (strain ATCC 8482 / DSM 1447 / JCM 5826 / CCUG 4940 / NBRC 14291 / NCTC 11154) (Bacteroides vulgatus).